We begin with the raw amino-acid sequence, 564 residues long: Alpha-farnesene synthase (564 aa).

The Mg(2+) site is built by Asp313, Asp317, Thr464, and Glu468. Residues 313–317 carry the DDXXD motif motif; that stretch reads DDVYD.

Belongs to the terpene synthase family. The cofactor is Mg(2+).

It carries out the reaction (2E,6E)-farnesyl diphosphate = (3E,6E)-alpha-farnesene + diphosphate. Catalyzes the cyclization of farnesyl diphosphate to (E,E)-alpha-farnesene. The chain is Alpha-farnesene synthase (TPS7) from Ricinus communis (Castor bean).